The following is a 484-amino-acid chain: uncharacterized protein (484 aa).

This sequence to M.thermoautotrophicum MTH1153.

This is an uncharacterized protein from Methanocaldococcus jannaschii (strain ATCC 43067 / DSM 2661 / JAL-1 / JCM 10045 / NBRC 100440) (Methanococcus jannaschii).